Consider the following 332-residue polypeptide: Glycerol-3-phosphate dehydrogenase [NAD(P)+] (332 aa).

W11, R30, and K108 together coordinate NADPH. Positions 108, 137, and 139 each coordinate sn-glycerol 3-phosphate. A141 contacts NADPH. K192, D245, S255, R256, and N257 together coordinate sn-glycerol 3-phosphate. The active-site Proton acceptor is the K192. Residue R256 participates in NADPH binding. The NADPH site is built by V280 and E282.

This sequence belongs to the NAD-dependent glycerol-3-phosphate dehydrogenase family.

It is found in the cytoplasm. The enzyme catalyses sn-glycerol 3-phosphate + NAD(+) = dihydroxyacetone phosphate + NADH + H(+). It carries out the reaction sn-glycerol 3-phosphate + NADP(+) = dihydroxyacetone phosphate + NADPH + H(+). Its pathway is membrane lipid metabolism; glycerophospholipid metabolism. Its function is as follows. Catalyzes the reduction of the glycolytic intermediate dihydroxyacetone phosphate (DHAP) to sn-glycerol 3-phosphate (G3P), the key precursor for phospholipid synthesis. The sequence is that of Glycerol-3-phosphate dehydrogenase [NAD(P)+] from Burkholderia cenocepacia (strain HI2424).